The chain runs to 232 residues: 26S proteasome non-ATPase regulatory subunit 10 (232 aa).

6 ANK repeats span residues 45-75, 79-108, 112-141, 144-173, 177-206, and 210-232; these read DERT…SPNT, GGWT…DPNT, SKRT…KNRK, TGSA…NINS, EGDT…DTTI, and DSKT…EFKK.

Acts as a chaperone during the assembly of the 26S proteasome, specifically of the 19S regulatory complex (RC). The sequence is that of 26S proteasome non-ATPase regulatory subunit 10 (psmD10) from Dictyostelium discoideum (Social amoeba).